A 475-amino-acid chain; its full sequence is MGGTSLDPALAEIGKKNGLLVWRINKFVLEPVPEVDHGVFYIGDAYIALYQKYDGCWDVHFWLGKNASTDEIGVAAIKTVEIDDSLGGIPTQHREIQNYESPLFLSYFPDGIRYVSGGYESGYRHVDDQFKNWKPHLFHCKGKRNVRCTEVECEVNSLNLGDVFILDLGKDLYVWMPPESGRLERIKGMARAKNIADHERMGIPKVHILDDVEWDNDSTFWSYFGGVSSVRKVSKGKDDDDNYWKRLTEQITLWKVSDASGAAKVSMVSQGENIRKEQLDPKDAFILDAINGGIFVWIGHECTLEERSKALIWGQNYLKQHHLPRWTQVTRVLESAESTQFTQWFRDWVDEKKKNTFTPLLFQVSDESGLLHVEEIANFTQEDLDGDDVMILDALNSIYVWVGANANANEKKEALNTAKLYLEKDKLPRHKKTAIDTIFQGKEPPTFKKFFPSWDDNLFKNEVRSVQNMRRLLFH.

The tract at residues 1–131 (MGGTSLDPAL…GYRHVDDQFK (131 aa)) is actin binding, actin severing, Ca-sensitive. The necessary for barbed end capping activity stretch occupies residues 1 to 239 (MGGTSLDPAL…VRKVSKGKDD (239 aa)). Residues 27-105 (FVLEPVPEVD…IQNYESPLFL (79 aa)) form a Gelsolin-like 1 repeat. Residues 70-73 (DEIG) form an actin-actin interfilament contact point region. The required for synapse elimination during development stretch occupies residues 106–147 (SYFPDGIRYVSGGYESGYRHVDDQFKNWKPHLFHCKGKRNVR). Residues 133 to 227 (WKPHLFHCKG…STFWSYFGGV (95 aa)) are required for phosphatidylinositol 4,5-bisphosphate binding and regulation. Gelsolin-like repeat units follow at residues 148 to 208 (CTEV…KVHI), 275 to 341 (RKEQ…STQF), and 375 to 447 (EIAN…PPTF). The tract at residues 240-475 (DDNYWKRLTE…VQNMRRLLFH (236 aa)) is F- and G-actin binding, Ca-independent. Residues 248–348 (TEQITLWKVS…TQFTQWFRDW (101 aa)) are inhibitory for phosphatidylinositol 4,5-bisphosphate binding activity.

The protein belongs to the villin/gelsolin family. Monomer. Binds to actin monomers and filaments. Cleavage by caspase ced-3 activates its actin-severing function and is required for the elimination of presynaptic components during development.

The protein resides in the cytoplasm. The protein localises to the cytoskeleton. Functionally, calcium-regulated, actin-modulating protein that binds to the plus (or barbed) ends of actin monomers or filaments, preventing monomer exchange (end-blocking or capping). Binds actin but does not nucleate actin polymerization, albeit slows down elongation by blocking the barbed ends. By promoting actin depolymerization, required for the elimination of presynaptic components downstream of the egl-1, ced-4 and ced-3 apoptotic pathway during larval development. In Caenorhabditis elegans, this protein is Gelsolin-like protein 1.